We begin with the raw amino-acid sequence, 284 residues long: Transmembrane protein 163b (284 aa).

The disordered stretch occupies residues 1 to 44 (MTDSSSASDPTAGPVDPGPAPSAPDPALEDPASTPANGHHPNQA). Residues 1–83 (MTDSSSASDP…HEAQSYRKKA (83 aa)) lie on the Cytoplasmic side of the membrane. Residues 84-104 (LWVSWVSIVVTMILAIAAFTV) form a helical membrane-spanning segment. Over 105 to 111 (SIMRHSA) the chain is Extracellular. Residues 112–132 (SAFGFAFDATLDVLSSIIVLW) form a helical membrane-spanning segment. The Cytoplasmic portion of the chain corresponds to 133–145 (RYSNAAAVHSAHR). The helical transmembrane segment at 146-166 (EYIACVILGVVFILSAITILV) threads the bilayer. The Extracellular portion of the chain corresponds to 167–182 (KAIHDLATKLEPEVDD). A helical transmembrane segment spans residues 183-203 (FLYSVSVISGVVCTVLCVCKF). The Cytoplasmic portion of the chain corresponds to 204–212 (MLGKVLTSR). A helical membrane pass occupies residues 213–233 (ALITDGFNSLVGGVMGFSILI). At 234 to 243 (SAEVFKHEPS) the chain is on the extracellular side. A helical transmembrane segment spans residues 244–264 (VWFLDGTIGILIGLIILAYGV). The Cytoplasmic segment spans residues 265-284 (KLLKDMVPRIRQTRHYERFE).

This sequence belongs to the TMEM163 family.

Its subcellular location is the cytoplasmic vesicle. The protein localises to the secretory vesicle. It is found in the synaptic vesicle membrane. It localises to the early endosome membrane. The protein resides in the late endosome membrane. Its subcellular location is the lysosome membrane. The protein localises to the cell membrane. The catalysed reaction is Zn(2+)(in) = Zn(2+)(out). Zinc ion transporter that mediates zinc efflux and plays a crucial role in intracellular zinc homeostasis. Binds the divalent cations Zn(2+), Ni(2+), and to a minor extent Cu(2+). Is a functional modulator of P2X purinoceptors, including P2RX1, P2RX3, P2RX4 and P2RX7. Plays a role in central nervous system development and is required for myelination, and survival and proliferation of oligodendrocytes. This Danio rerio (Zebrafish) protein is Transmembrane protein 163b.